A 32-amino-acid chain; its full sequence is Trypsin inhibitor 3 (32 aa).

Cystine bridges form between Cys-6–Cys-23, Cys-13–Cys-25, and Cys-19–Cys-31.

The protein belongs to the protease inhibitor I7 (squash-type serine protease inhibitor) family.

Its subcellular location is the secreted. Inhibits trypsin. This chain is Trypsin inhibitor 3, found in Cucurbita pepo (Vegetable marrow).